The sequence spans 317 residues: Acetyl-coenzyme A carboxylase carboxyl transferase subunit alpha (317 aa).

One can recognise a CoA carboxyltransferase C-terminal domain in the interval 40 to 294 (RLQKKSEELT…KARLLTDLED (255 aa)).

Belongs to the AccA family. In terms of assembly, acetyl-CoA carboxylase is a heterohexamer composed of biotin carboxyl carrier protein (AccB), biotin carboxylase (AccC) and two subunits each of ACCase subunit alpha (AccA) and ACCase subunit beta (AccD).

The protein localises to the cytoplasm. The catalysed reaction is N(6)-carboxybiotinyl-L-lysyl-[protein] + acetyl-CoA = N(6)-biotinyl-L-lysyl-[protein] + malonyl-CoA. Its pathway is lipid metabolism; malonyl-CoA biosynthesis; malonyl-CoA from acetyl-CoA: step 1/1. Component of the acetyl coenzyme A carboxylase (ACC) complex. First, biotin carboxylase catalyzes the carboxylation of biotin on its carrier protein (BCCP) and then the CO(2) group is transferred by the carboxyltransferase to acetyl-CoA to form malonyl-CoA. The chain is Acetyl-coenzyme A carboxylase carboxyl transferase subunit alpha from Actinobacillus succinogenes (strain ATCC 55618 / DSM 22257 / CCUG 43843 / 130Z).